Here is a 379-residue protein sequence, read N- to C-terminus: NADH-quinone oxidoreductase subunit D 1 (379 aa).

The protein belongs to the complex I 49 kDa subunit family. As to quaternary structure, NDH-1 is composed of 14 different subunits. Subunits NuoB, C, D, E, F, and G constitute the peripheral sector of the complex.

It localises to the cell inner membrane. It catalyses the reaction a quinone + NADH + 5 H(+)(in) = a quinol + NAD(+) + 4 H(+)(out). Its function is as follows. NDH-1 shuttles electrons from NADH, via FMN and iron-sulfur (Fe-S) centers, to quinones in the respiratory chain. The immediate electron acceptor for the enzyme in this species is believed to be ubiquinone. Couples the redox reaction to proton translocation (for every two electrons transferred, four hydrogen ions are translocated across the cytoplasmic membrane), and thus conserves the redox energy in a proton gradient. The protein is NADH-quinone oxidoreductase subunit D 1 of Anaeromyxobacter sp. (strain K).